The chain runs to 131 residues: Antileukoproteinase (131 aa).

Residues 1–25 (MKSCGLLPFTVLLALGILAPWTVEG) form the signal peptide. WAP domains lie at 29-77 (DAIK…VNPV) and 83-131 (VWRK…LPPM). Disulfide bonds link cysteine 36–cysteine 65, cysteine 44–cysteine 69, cysteine 52–cysteine 64, cysteine 58–cysteine 73, cysteine 90–cysteine 119, cysteine 97–cysteine 123, cysteine 106–cysteine 118, and cysteine 112–cysteine 127. Residues 85–131 (RKPGRCVKTQARCMMLNPPNVCQRDGQCDGKYKCCEGICGKVCLPPM) are elastase inhibitory domain.

In terms of assembly, interacts with GRN; interaction protects progranulin from proteolysis. In terms of tissue distribution, detected in bronchial epithelial cells. Detected in bronchoalveolar fluid after infection with M.tuberculosis (at protein level). Highest expression in lung, spleen, intestine and epididymis with lower levels in liver and seminal vesicle. No expression in brain, heart, kidney and muscle.

The protein localises to the secreted. In terms of biological role, acid-stable proteinase inhibitor with strong affinities for trypsin, chymotrypsin, elastase, and cathepsin G. Modulates the innate immune response after bacterial infection. Contributes to regulate the inflammatory and immune responses to the intracellular parasite L.major. Down-regulates responses to bacterial lipopolysaccharide (LPS). Plays a role in regulating the activation of NF-kappa-B and inflammatory responses. Has antimicrobial activity against mycobacteria, but not against salmonella. Contributes to normal resistance against infection by M.tuberculosis. Required for normal resistance to L.major. Required for normal wound healing, probably by preventing tissue damage by limiting protease activity. Together with ELANE, required for normal differentiation and proliferation of bone marrow myeloid cells. This is Antileukoproteinase (Slpi) from Mus musculus (Mouse).